We begin with the raw amino-acid sequence, 406 residues long: RILP-like protein 1 (406 aa).

Phosphoserine is present on Ser-7. The RH1 domain occupies 10–97 (AALSALEKNV…RVERMDRIEK (88 aa)). Cys-47 carries the post-translational modification S-nitrosocysteine. The stretch at 76-258 (ELDELRLELD…KLRERLQGEH (183 aa)) forms a coiled coil. Disordered stretches follow at residues 255–280 (QGEH…ESIS) and 330–354 (EIEE…QPES). The residue at position 259 (Ser-259) is a Phosphoserine. The segment covering 262 to 280 (GEEEEAEIQPQPDGEESIS) has biased composition (acidic residues). One can recognise an RH2 domain in the interval 294 to 359 (RPRFTLQELR…PQPESGIKRL (66 aa)).

Belongs to the RILPL family. In terms of assembly, interacts (when S-nitrosylated) with GAPDH. Interacts with RAB8A; interaction is dependent on the phosphorylation of 'Thr-72' of RAB8A. Interacts with RAB10 and RAB12; the interaction is dependent on the phosphorylation of 'Thr-73' of RAB10, and 'Ser-105' of RAB12. S-nitrosylation is required for the interaction with GAPDH.

The protein resides in the cytoplasm. It is found in the cytosol. Its subcellular location is the cell projection. It localises to the cilium. The protein localises to the cytoskeleton. The protein resides in the microtubule organizing center. It is found in the centrosome. Its subcellular location is the centriole. In terms of biological role, neuroprotective protein, which acts by sequestring GAPDH in the cytosol and prevent the apoptotic function of GAPDH in the nucleus. Competes with SIAH1 for binding GAPDH. Does not regulate lysosomal morphology and distribution. Plays a role in the regulation of cell shape and polarity. Plays a role in cellular protein transport, including protein transport away from primary cilia. Binds to RAB10 following LRRK2-mediated RAB10 phosphorylation which leads to inhibition of ciliogenesis. The sequence is that of RILP-like protein 1 (Rilpl1) from Mus musculus (Mouse).